The following is a 261-amino-acid chain: Type II restriction enzyme Sau96I (261 aa).

In terms of assembly, monomer.

It carries out the reaction Endonucleolytic cleavage of DNA to give specific double-stranded fragments with terminal 5'-phosphates.. Functionally, a P subtype restriction enzyme that recognizes the double-stranded sequence 5'-GGNCC-3' and cleaves after G-1. In Staphylococcus aureus, this protein is Type II restriction enzyme Sau96I.